A 252-amino-acid chain; its full sequence is Probable transcriptional regulatory protein RF_0799 (252 aa).

The interval 1-21 (MAGHSKFKNIQHRKGAQDKKR) is disordered.

Belongs to the TACO1 family.

It is found in the cytoplasm. This Rickettsia felis (strain ATCC VR-1525 / URRWXCal2) (Rickettsia azadi) protein is Probable transcriptional regulatory protein RF_0799.